We begin with the raw amino-acid sequence, 138 residues long: uncharacterized protein (138 aa).

It localises to the plastid. The protein resides in the chloroplast. This is an uncharacterized protein from Chlorella vulgaris (Green alga).